The sequence spans 316 residues: L-lactate dehydrogenase (316 aa).

Position 34-39 (34-39) interacts with NAD(+); the sequence is DVVEGV. Substrate contacts are provided by R89, N121, and R152. N121 contributes to the NAD(+) binding site. Catalysis depends on H172, which acts as the Proton acceptor.

It belongs to the LDH/MDH superfamily. LDH family. In terms of assembly, homotetramer.

It carries out the reaction (S)-lactate + NAD(+) = pyruvate + NADH + H(+). It functions in the pathway fermentation; pyruvate fermentation to lactate; (S)-lactate from pyruvate: step 1/1. The sequence is that of L-lactate dehydrogenase from Botryococcus braunii (Green alga).